The chain runs to 722 residues: MQGSKGIENPAFVPSSPGTPRRASASPSQVEVSAVASRNQNGGSQPRESEEPQKSTEPSPPSSNPPASDEPPGSQLSELEEGPCGWRGFHPQCLQRCNTPQGFLLHYCLLALTQGIVVNGLVNISISTIEKRYEMKSSLTGLISSSYDISFCVLSLFVSFFGERGHKPRWLAFASFMIGLGALVFSLPHFFSGRYELGSIFEDTCLTRNSTRCSSSTSLLSNYFYVFVLGQLLLGTGGTPLYTLGTAFIDDSVPTHKSSLYIGIGYSMSILGPAIGYVLGGQLLTMYIDIAMGQSSDLTEDDPRWLGAWWIGFLLAWLFAWSLIMPFSCFPKHLPGTAKIQAGKTSQTHQNNSTSFQHTDENFGKSIKDFPTAVKNLMRNTVFICLVLSTTSEALITTGFATFLPKFIENQFGLTSSFAATLGGAVLIPGAALGQILGGVLVSKFKMKCKNTMKFALCTSGVALVLSFVFIYAKCENEPFAGVSESYNGTGEMGNLTAPCNANCNCLRSYYYPLCGSDGIQYFSPCFAGCLNSVSNRKPKVYYNCSCIERKITSTAESTDFEAKAGKCRTRCSNLPIFLGIFFITVIFTFMAGTPITVSILRCVNHRHRSLALGVQFMLLRLLGTIPGPIIFGVIIDSTCVLWDVNECGIKGACWIYDNIKMAHMLVAISVTCKVITIFFNGLAIVLYKPPPPGTEVSFQSQNVIVSTISVEEDLDKAENEG.

Residues Met-1–Glu-81 form a disordered region. Topologically, residues Met-1–Gln-101 are cytoplasmic. Ser-15 and Ser-16 each carry phosphoserine. Residue Thr-19 is modified to Phosphothreonine. Phosphoserine is present on residues Ser-24, Ser-26, and Ser-28. A compositionally biased stretch (polar residues) spans Ala-25–Pro-46. A helical transmembrane segment spans residues Gly-102–Val-122. Over Asn-123–Gly-141 the chain is Extracellular. Residues Leu-142 to Gly-162 traverse the membrane as a helical segment. Topologically, residues Glu-163–Pro-168 are cytoplasmic. The chain crosses the membrane as a helical span at residues Arg-169–Gly-193. Residues Arg-194–Ser-218 lie on the Extracellular side of the membrane. A helical transmembrane segment spans residues Leu-219–Ile-249. Topologically, residues Asp-250–Ser-269 are cytoplasmic. Residues Ile-270–Ile-290 traverse the membrane as a helical segment. The Extracellular portion of the chain corresponds to Ala-291–Leu-306. The chain crosses the membrane as a helical span at residues Gly-307–Pro-331. Over Lys-332–Asn-376 the chain is Cytoplasmic. A helical transmembrane segment spans residues Leu-377–Thr-398. The Extracellular segment spans residues Gly-399–Phe-418. A helical transmembrane segment spans residues Ala-419–Val-442. Topologically, residues Ser-443–Lys-446 are cytoplasmic. A helical membrane pass occupies residues Met-447–Phe-470. Residues Ile-471–Phe-578 lie on the Extracellular side of the membrane. Positions Gly-494 to Glu-549 constitute a Kazal-like domain. Cystine bridges form between Cys-500–Cys-530, Cys-506–Cys-526, and Cys-515–Cys-547. The helical transmembrane segment at Leu-579–Leu-601 threads the bilayer. Residues Arg-602–Ser-610 lie on the Cytoplasmic side of the membrane. Residues Leu-611–Ile-636 traverse the membrane as a helical segment. Over Asp-637–Ser-670 the chain is Extracellular. The helical transmembrane segment at Val-671–Tyr-688 threads the bilayer. Topologically, residues Lys-689–Gly-722 are cytoplasmic.

The protein belongs to the organo anion transporter (TC 2.A.60) family. In terms of tissue distribution, strongly expressed in initial segment of epididymis and seminal vesicles.

It is found in the basolateral cell membrane. The enzyme catalyses estrone 3-sulfate(out) = estrone 3-sulfate(in). It carries out the reaction L-thyroxine(out) = L-thyroxine(in). It catalyses the reaction 3,3',5-triiodo-L-thyronine(out) = 3,3',5-triiodo-L-thyronine(in). The catalysed reaction is chenodeoxycholate(out) = chenodeoxycholate(in). The enzyme catalyses glycocholate(out) = glycocholate(in). It carries out the reaction L-homoarginine(in) = L-homoarginine(out). It catalyses the reaction L-arginine(in) = L-arginine(out). The catalysed reaction is N(omega),N(omega)-dimethyl-L-arginine(out) = N(omega),N(omega)-dimethyl-L-arginine(in). Functionally, mediates the transport of organic anions such as steroids (estrone 3-sulfate, chenodeoxycholate, glycocholate) and thyroid hormones (3,3',5-triiodo-L-thyronine (T3), L-thyroxine (T4)), in the kidney. Capable of transporting cAMP and pharmacological substances such as digoxin, ouabain and methotrexate. Transport is independent of sodium, chloride ion, and ATP. Transport activity is stimulated by an acidic extracellular environment due to increased substrate affinity to the transporter. The driving force for this transport activity is currently not known. The role of hydrogencarbonate (HCO3(-), bicarbonate) as the probable counteranion that exchanges for organic anions is still not well defined. Functions as an uptake transporter at the apical membrane, suggesting a role in renal reabsorption. Involved in the renal secretion of the uremic toxin ADMA (N(omega),N(omega)-dimethyl-L-arginine or asymmetrical dimethylarginine), which is associated to cardiovascular events and mortality, and the structurally related amino acids L-arginine and L-homoarginine (a cardioprotective biomarker). Can act bidirectionally, suggesting a dual protective role of this transport protein; exporting L-homoarginine after being synthesized in proximal tubule cells, and mediating uptake of ADMA from the blood into proximal tubule cells where it is degraded by the enzyme dimethylarginine dimethylaminohydrolase 1 (DDAH1). May be involved in sperm maturation by enabling directed movement of organic anions and compounds within or between cells. This ion-transporting process is important to maintain the strict epididymal homeostasis necessary for sperm maturation. May have a role in secretory functions since seminal vesicle epithelial cells are assumed to secrete proteins involved in decapacitation by modifying surface proteins to facilitate the acquisition of the ability to fertilize the egg. This Mus musculus (Mouse) protein is Solute carrier organic anion transporter family member 4C1.